A 198-amino-acid chain; its full sequence is Recombination protein RecR (198 aa).

The C4-type zinc finger occupies 58–73; the sequence is CSTCGNFTDTDPCALC. The Toprim domain occupies 81 to 175; that stretch reads STICVVEQPK…KVTRIAAGIP (95 aa).

This sequence belongs to the RecR family.

In terms of biological role, may play a role in DNA repair. It seems to be involved in an RecBC-independent recombinational process of DNA repair. It may act with RecF and RecO. The polypeptide is Recombination protein RecR (Clostridium botulinum (strain Alaska E43 / Type E3)).